The primary structure comprises 584 residues: Segmentation polarity homeobox protein engrailed (584 aa).

5 disordered regions span residues 1 to 27 (MALE…PQQH), 141 to 198 (EESD…SKPS), 343 to 380 (IGQA…SSST), 392 to 451 (CSSA…GGKN), and 465 to 492 (DRPS…PRTA). Residues 12–23 (APSPPGCLPHSP) are compositionally biased toward pro residues. Positions 160–174 (TEEDEEEDDDIDVDD) are enriched in acidic residues. The span at 189–198 (HQQSKQSKPS) shows a compositional bias: polar residues. Composition is skewed to low complexity over residues 348-380 (STTP…SSST) and 392-405 (CSSA…SPSS). Positions 478–489 (QPKDKTNDEKRP) are enriched in basic and acidic residues. Positions 486 to 545 (EKRPRTAFSSEQLARLKREFNENRYLTERRRQQLSSELGLNEAQIKIWFQNKRAKIKKST) form a DNA-binding region, homeobox.

It belongs to the engrailed homeobox family.

It is found in the nucleus. This protein specifies the body segmentation pattern. It is required for the development of the central nervous system. Transcriptional regulator that repress activated promoters. In Drosophila virilis (Fruit fly), this protein is Segmentation polarity homeobox protein engrailed (en).